A 620-amino-acid polypeptide reads, in one-letter code: MHYIRELLIVVFTSCPALSYAHSSLDGSRYCRCQPGEACWPSLADWQALNSSIQGNLVEVRPIGHVCHEPTYNKAACERVSKLSSNGTWRANQPGAQQEYAWEVSLSRNESCYVGPDNPTEPCSQGRIPRYSAMVETTEQAQKAIMFARERQLRLVIKNTGHDSGGRSSAVDSFQILTQRLKDITFIPEFTPTLGLAEGTYKSKGPSVRIGAGVLTKELYAAADEHGYTVMGGECATVGIAGGYIQGGGVSTALTPMLGLAVDLVQEFEVITAEGRHVIANEFQNQDLFWALRGGGGGTFGLVTSVTMPVFGAMPAVISELTFESQEPGEPFWRAVKEVIYATRDLSTGGNSGQYWIGRGPTGSYFVRLTLFFIGEMDTGKMGGKVGSLLSALQDQEIGFHLNSTAYDRLSSFLAIPQGEFVGGIAFHQENILIPRGFYDSPEGPAELVNRLAEVKLNPGDMWVANALGGKVMANKDSVDNAMHPGWRTAAVLLVGNRIFEPVLEAQRAVQERMTAVEGPLLHSLGPPGPVAIYLNEADADLENWQEWFWGEKYNRLRDIKRKWDPDDLFLVRHGVGSEDWDEEGMCWIQMSIEECPVREPSQCTCPSFGCPMRHVPGLL.

Positions 1 to 21 (MHYIRELLIVVFTSCPALSYA) are cleaved as a signal peptide. Residues N50, N86, and N109 are each glycosylated (N-linked (GlcNAc...) asparagine). The FAD-binding PCMH-type domain maps to 124–313 (SQGRIPRYSA…TSVTMPVFGA (190 aa)). An N-linked (GlcNAc...) asparagine glycan is attached at N403.

It belongs to the oxygen-dependent FAD-linked oxidoreductase family. FAD is required as a cofactor.

Its pathway is alkaloid biosynthesis. In terms of biological role, FAD-linked oxidoreductase; part of the gene cluster that mediates the biosynthesis of notoamide, a fungal indole alkaloid that belongs to a family of natural products containing a characteristic bicyclo[2.2.2]diazaoctane core. The first step of notoamide biosynthesis involves coupling of L-proline and L-tryptophan by the bimodular NRPS notE, to produce cyclo-L-tryptophan-L-proline called brevianamide F. The reverse prenyltransferase notF then acts as a deoxybrevianamide E synthase and converts brevianamide F to deoxybrevianamide E via reverse prenylation at C-2 of the indole ring leading to the bicyclo[2.2.2]diazaoctane core. Deoxybrevianamide E is further hydroxylated at C-6 of the indole ring, likely catalyzed by the cytochrome P450 monooxygenase notG, to yield 6-hydroxy-deoxybrevianamide E. 6-hydroxy-deoxybrevianamide E is a specific substrate of the prenyltransferase notC for normal prenylation at C-7 to produce 6-hydroxy-7-prenyl-deoxybrevianamide, also called notoamide S. As the proposed pivotal branching point in notoamide biosynthesis, notoamide S can be diverted to notoamide E through an oxidative pyran ring closure putatively catalyzed by either notH cytochrome P450 monooxygenase or the notD FAD-linked oxidoreductase. This step would be followed by an indole 2,3-epoxidation-initiated pinacol-like rearrangement catalyzed by the notB FAD-dependent monooxygenase leading to the formation of notoamide C and notoamide D. On the other hand notoamide S is converted to notoamide T by notH (or notD), a bifunctional oxidase that also functions as the intramolecular Diels-Alderase responsible for generation of (+)-notoamide T. To generate antipodal (-)-notoaminide T, notH' (or notD') in Aspergillus versicolor is expected to catalyze a Diels-Alder reaction leading to the opposite stereochemistry. The remaining oxidoreductase notD (or notH) likely catalyzes the oxidative pyran ring formation to yield (+)-stephacidin A. The FAD-dependent monooxygenase notI is highly similar to notB and is predicted to catalyze a similar conversion from (+)-stephacidin A to (-)-notoamide B via the 2,3-epoxidation of (+)-stephacidin A followed by a pinacol-type rearrangement. Finally, it remains unclear which enzyme could be responsible for the final hydroxylation steps leading to notoamide A and sclerotiamide. The polypeptide is FAD-linked oxidoreductase notD (Aspergillus sp. (strain MF297-2)).